The chain runs to 421 residues: Serine/threonine-protein kinase OXI1 (421 aa).

In terms of domain architecture, Protein kinase spans 17 to 329 (LEVLSLLGRG…VEEIKGHDFF (313 aa)). ATP contacts are provided by residues 23 to 31 (LGRGAKGVV) and K45. The active-site Proton acceptor is the D149. The activation loop stretch occupies residues 167–246 (DFDLSTNLAP…VGTEEYVAPE (80 aa)). A Phosphoserine; by PDPK1 modification is found at S235. The AGC-kinase C-terminal domain occupies 330–421 (RGVDWEKVIL…LESDNNFLVF (92 aa)). Positions 418–421 (FLVF) match the PIF motif.

This sequence belongs to the protein kinase superfamily. AGC Ser/Thr protein kinase family. As to quaternary structure, interacts with PDK1 and PDK2. As to expression, expressed in roots and root hair cells.

The catalysed reaction is L-seryl-[protein] + ATP = O-phospho-L-seryl-[protein] + ADP + H(+). It catalyses the reaction L-threonyl-[protein] + ATP = O-phospho-L-threonyl-[protein] + ADP + H(+). Its activity is regulated as follows. Activated in response to hydrogen peroxide and cellulase elicitor. Activated by PDK1 in a phosphatidic acid dependent manner. Functionally, involved in oxidative burst-mediated signaling. Required for basal resistance to P.parasitica infection and root hair growth. Partly required for the activation of MPK3 and MPK6 by hydrogen peroxide and cellulase elicitor. This is Serine/threonine-protein kinase OXI1 from Arabidopsis thaliana (Mouse-ear cress).